A 419-amino-acid chain; its full sequence is MRGLLVLSVLLGAVFGKEDFVGHQVLRISVADEAQVQKVKELEDLEHLQLDFWRGPAHPGSPIDVRVPFPSIQAVKIFLESHGISYETMIEDVQSLLDEEQEQMFAFRSRARSTDTFNYATYHTLEEIYDFLDLLVAENPHLVSKIQIGNTYEGRPIYVLKFSTGGSKRPAIWIDTGIHSREWVTQASGVWFAKKITQDYGQDAAFTAILDTLDIFLEIVTNPDGFAFTHSTNRMWRKTRSHTAGSLCIGVDPNRNWDAGFGLSGASSNPCSETYHGKFANSEVEVKSIVDFVKDHGNIKAFISIHSYSQLLMYPYGYKTEPVPDQDELDQLSKAAVTALASLYGTKFNYGSIIKAIYQASGSTIDWTYSQGIKYSFTFELRDTGRYGFLLPASQIIPTAKETWLALLTIMEHTLNHPY.

The first 16 residues, 1-16 (MRGLLVLSVLLGAVFG), serve as a signal peptide directing secretion. Positions 17–110 (KEDFVGHQVL…QEQMFAFRSR (94 aa)) are cleaved as a propeptide — activation peptide. The Peptidase M14 domain maps to 121 to 414 (TYHTLEEIYD…LALLTIMEHT (294 aa)). The Zn(2+) site is built by H179 and E182. Substrate-binding positions include 179 to 182 (HSRE), R237, and 254 to 255 (NR). A disulfide bridge connects residues C248 and C271. Zn(2+) is bound at residue H306. Residues 307-308 (SY) and Y358 contribute to the substrate site. The active-site Proton donor/acceptor is the E380.

The protein belongs to the peptidase M14 family. In terms of assembly, monomer. May form a complex with proelastase 2. It depends on Zn(2+) as a cofactor.

Its subcellular location is the secreted. The catalysed reaction is Release of a C-terminal amino acid, but little or no action with -Asp, -Glu, -Arg, -Lys or -Pro.. It catalyses the reaction leukotriene C4 + H2O = leukotriene F4 + glycine. Inhibited by interaction with the S.magnifica carboxypeptidase inhibitor SmCI. In terms of biological role, carboxypeptidase that catalyzes the release of a C-terminal amino acid, but has little or no action with -Asp, -Glu, -Arg, -Lys or -Pro. Catalyzes the conversion of leukotriene C4 to leukotriene F4 via the hydrolysis of an amide bond. The chain is Carboxypeptidase A1 from Homo sapiens (Human).